Consider the following 261-residue polypeptide: Imidazole glycerol phosphate synthase subunit HisF (261 aa).

Active-site residues include Asp-12 and Asp-131.

Belongs to the HisA/HisF family. As to quaternary structure, heterodimer of HisH and HisF.

The protein resides in the cytoplasm. It catalyses the reaction 5-[(5-phospho-1-deoxy-D-ribulos-1-ylimino)methylamino]-1-(5-phospho-beta-D-ribosyl)imidazole-4-carboxamide + L-glutamine = D-erythro-1-(imidazol-4-yl)glycerol 3-phosphate + 5-amino-1-(5-phospho-beta-D-ribosyl)imidazole-4-carboxamide + L-glutamate + H(+). Its pathway is amino-acid biosynthesis; L-histidine biosynthesis; L-histidine from 5-phospho-alpha-D-ribose 1-diphosphate: step 5/9. In terms of biological role, IGPS catalyzes the conversion of PRFAR and glutamine to IGP, AICAR and glutamate. The HisF subunit catalyzes the cyclization activity that produces IGP and AICAR from PRFAR using the ammonia provided by the HisH subunit. The chain is Imidazole glycerol phosphate synthase subunit HisF from Brucella melitensis biotype 2 (strain ATCC 23457).